The following is a 1140-amino-acid chain: Rho GTPase-activating protein gacF (1140 aa).

Disordered regions lie at residues 1-145 (MKTH…KPSR), 189-236 (ESDI…IEPI), 455-504 (INNN…STSF), 520-644 (EVQQ…GLES), 661-700 (ESSK…DEDE), 720-759 (ETND…NNIS), 773-927 (AKVT…STLS), and 952-1095 (TSSP…NHTN). 2 stretches are compositionally biased toward low complexity: residues 10–26 (LGGL…LKSF) and 35–71 (QQQQ…ASSS). The stretch at 28-55 (TEEVIHEQQQQQQQHNNNNNNNNNHQRQ) forms a coiled coil. Residues 72–82 (IEETSGYLSKT) are compositionally biased toward polar residues. 2 stretches are compositionally biased toward low complexity: residues 83–136 (SSSS…TSSP) and 193–222 (DNGS…SSSS). The region spanning 234–409 (EPISQSTEDY…RLIENYHSIF (176 aa)) is the Rho-GAP domain. Composition is skewed to low complexity over residues 456–475 (NNNS…SPYK) and 482–493 (PKSSPKLNNRNS). Polar residues predominate over residues 494–504 (ISPKLSSSTSF). Residues 517–548 (ISDEVQQEQQNQQQQQDEQQDEQQDEQQDEQQ) are a coiled coil. Residues 520–533 (EVQQEQQNQQQQQD) are compositionally biased toward low complexity. Residues 534–549 (EQQDEQQDEQQDEQQD) show a composition bias toward acidic residues. Over residues 550–566 (EQNSNSTSINTSSSSIT) the composition is skewed to low complexity. The span at 572–596 (STVQYLNRINTCRRPSSWTNNNRIK) shows a compositional bias: polar residues. Basic residues predominate over residues 597–606 (QQQHHHHHHQ). Positions 607-631 (QQQQHQQHQQQQSSSSESNSSLTSS) are enriched in low complexity. Composition is skewed to polar residues over residues 632–641 (PQKRLNSVNG) and 672–684 (NRQM…NNIG). Residues 724-759 (DNNNNDQINNSNSSNNIPKTTITTTTNNTTTTNNIS) show a composition bias toward low complexity. The segment covering 773–796 (AKVTPTPTPAPMQTSSFLSTKQTN) has biased composition (polar residues). The segment covering 797–822 (SPSSSSSPSSTVSSTSSSPSSSLSSS) has biased composition (low complexity). Positions 823–854 (IDNKTMSNVNYNRFQPANRTVSSPNVRNFSVP) are enriched in polar residues. 3 stretches are compositionally biased toward low complexity: residues 891–914 (KPKN…NSTP), 952–1058 (TSSP…TSST), and 1065–1079 (HSNS…SSSS).

The protein resides in the cytoplasm. Its function is as follows. Rho GTPase-activating protein involved in the signal transduction pathway. The sequence is that of Rho GTPase-activating protein gacF (gacF) from Dictyostelium discoideum (Social amoeba).